We begin with the raw amino-acid sequence, 453 residues long: Armadillo repeat-containing X-linked protein 1 (453 aa).

Residues 1–6 (MGRTRE) lie on the Mitochondrial intermembrane side of the membrane. Mitochondrion outer membrane (MOM)-targeting sequence stretches follow at residues 1 to 6 (MGRTRE) and 26 to 36 (RLAWGRDENEK). A helical; Signal-anchor membrane pass occupies residues 7–29 (AGCVAAGVVIGAGACYCVYRLAW). The Cytoplasmic segment spans residues 30–453 (GRDENEKIWD…VKVLKVLTKL (424 aa)). 2 disordered regions span residues 58 to 77 (AKTN…SEVK) and 132 to 182 (ISGN…RAPA). Residues 167–177 (GKSKGKARSKS) show a composition bias toward basic residues. 4 ARM repeats span residues 195–235 (PYKI…NNAA), 237–276 (SFNQ…NLSV), 358–398 (PAMT…NIND), and 415–453 (SSLF…LTKL).

This sequence belongs to the eutherian X-chromosome-specific Armcx family. As to quaternary structure, interacts with MIRO1. Expressed at high levels ovary, heart, testis, prostate, brain, spleen and colon. Expressed at very low levels in liver and thymus. Not expressed in peripheral blood leukocytes. Not or reduced expressed in lung, prostate, colon, pancreas and ovarian carcinomas.

It is found in the mitochondrion. Its subcellular location is the mitochondrion outer membrane. Regulates mitochondrial transport during axon regeneration. Increases the proportion of motile mitochondria by recruiting stationary mitochondria into the motile pool. Enhances mitochondria movement and neurite growth in both adult axons and embryonic neurons. Promotes neuronal survival and axon regeneration after nerve injury. May link mitochondria to the Trak1-kinesin motor complex via its interaction with MIRO1. In Homo sapiens (Human), this protein is Armadillo repeat-containing X-linked protein 1 (ARMCX1).